A 201-amino-acid chain; its full sequence is Small ribosomal subunit protein uS4 (201 aa).

Residues 1–42 (MARYTGPVTRKSRRLGTDLVGGDQSFEKRPYPPGQHGRARIK) form a disordered region. Residues 91–157 (SRLDNVVYRA…VPFQIARETA (67 aa)) enclose the S4 RNA-binding domain.

This sequence belongs to the universal ribosomal protein uS4 family. Part of the 30S ribosomal subunit. Contacts protein S5. The interaction surface between S4 and S5 is involved in control of translational fidelity.

In terms of biological role, one of the primary rRNA binding proteins, it binds directly to 16S rRNA where it nucleates assembly of the body of the 30S subunit. With S5 and S12 plays an important role in translational accuracy. This chain is Small ribosomal subunit protein uS4, found in Mycobacterium ulcerans (strain Agy99).